A 121-amino-acid polypeptide reads, in one-letter code: Large ribosomal subunit protein bL19 (121 aa).

It belongs to the bacterial ribosomal protein bL19 family.

Functionally, this protein is located at the 30S-50S ribosomal subunit interface and may play a role in the structure and function of the aminoacyl-tRNA binding site. The chain is Large ribosomal subunit protein bL19 from Chlorobium phaeobacteroides (strain BS1).